We begin with the raw amino-acid sequence, 179 residues long: MTMEFDPRRERRKVQKKMNVFDHRLISSNSNHRINIWRPTVSIKDNKTHISIIFELAGISRDQISIEVTKENTLVITGEKKSKGGLNNLPSSSSSINSDSTTNTNTNTTTTTTTAPPPPSDAQLKNIITIGKFIRSYKLPPGTDSSKIKATMDDGLLEIIIPKDTPSEDRLKIPIQSKL.

A sHSP domain is found at 32 to 178 (HRINIWRPTV…DRLKIPIQSK (147 aa)). The interval 80–122 (KKSKGGLNNLPSSSSSINSDSTTNTNTNTTTTTTTAPPPPSDA) is disordered. Over residues 87–114 (NNLPSSSSSINSDSTTNTNTNTTTTTTT) the composition is skewed to low complexity.

This sequence belongs to the small heat shock protein (HSP20) family.

In Dictyostelium discoideum (Social amoeba), this protein is Small heat shock protein hspK (hspK).